Reading from the N-terminus, the 298-residue chain is Protein FAM221A (298 aa).

A compositionally biased stretch (polar residues) spans 241-257; that stretch reads SSPETLTDVGTSSQVSS. The segment at 241–263 is disordered; it reads SSPETLTDVGTSSQVSSLRRPEE.

It belongs to the FAM221 family.

The sequence is that of Protein FAM221A (FAM221A) from Homo sapiens (Human).